The chain runs to 208 residues: Methyl-CpG-binding domain protein 3-like 3 (208 aa).

Belongs to the MBD3L family.

This Homo sapiens (Human) protein is Methyl-CpG-binding domain protein 3-like 3 (MBD3L3).